Consider the following 592-residue polypeptide: Pectinesterase/pectinesterase inhibitor 3 (592 aa).

The signal sequence occupies residues 1-35 (MAPSMKEIFSKDNFKKNKKLVLLSAAVALLFVAAV). Positions 36–238 (AGISAGASKA…KITSNNRKLK (203 aa)) are cleaved as a propeptide — removed in mature 42 kDa form. The propeptide at 36 to 273 (AGISAGASKA…WLSAGDRRLL (238 aa)) is removed in mature 38 kDa form. A pectinesterase inhibitor 3 region spans residues 53 to 212 (PSSHAVLRSS…EHMCSNALAM (160 aa)). Asn96 and Asn215 each carry an N-linked (GlcNAc...) asparagine glycan. A pectinesterase 3 region spans residues 281 to 578 (DATVAADGSG…YTAGQFIGGG (298 aa)). Positions 356 and 386 each coordinate substrate. Asp409 functions as the Proton donor; for pectinesterase activity in the catalytic mechanism. Cys423 and Cys443 are joined by a disulfide. The active-site Nucleophile; for pectinesterase activity is Asp430. Positions 454, 498, and 500 each coordinate substrate.

This sequence in the N-terminal section; belongs to the PMEI family. In the C-terminal section; belongs to the pectinesterase family. Interacts with BIIDXI and At5g11420. Binds reversibly to PMEI4, PMEI7 and PMEI8 to be inhibited; the stability of the PME3-PMEIs complexes and the inhibition of the pectin methylesterase (PME) activity is pH-dependent, based on protonation status of amino-acids at the complex interface. As to expression, expressed in roots, cotyledons, hypocotyls, seedlings, leaves, stems, flowers, dry seeds and siliques. Accumulates in etiolated hypocotyls (at protein level).

The protein resides in the secreted. The protein localises to the extracellular space. Its subcellular location is the apoplast. It localises to the cell wall. The enzyme catalyses [(1-&gt;4)-alpha-D-galacturonosyl methyl ester](n) + n H2O = [(1-&gt;4)-alpha-D-galacturonosyl](n) + n methanol + n H(+). Its pathway is glycan metabolism; pectin degradation; 2-dehydro-3-deoxy-D-gluconate from pectin: step 1/5. Its activity is regulated as follows. Regulated negatively by pectinesterase inhibitors (e.g. PMEI3, PMEI4, PMEI7 and PMEI9) in a pH-dependent manner, mainly in slightly acidic conditions (pH 6.0 and 5.0), especially in dark-grown hypocotyls; this processus relies on changes in the protonation of amino acids involved in intermolecular and intramolecular interactions. In terms of biological role, acts in the modification of cell walls via demethylesterification of cell wall pectin. Required for zinc Zn(2+) homeostasis and to monitor Zn(2+) influence on cell wall-controlled growth processes such as root cell elongation. Monitors seed germination and favors root hairs production. Prevents cruciferin seed storage proteins activity, but promotes the expression of genes involved in cell wall organization and remodeling as well as genes involved in lipid and protein metabolism, during post-germinative growth of seedlings. Confers sensitivity to Zn(2+) when overexpressed. Acts as a susceptibility factor required for the initial colonization of the host tissue by virulent pathogens including Botrytis cinerea and Pectobacterium carotovorum, probably by facilitating cell wall pectine degradation by pathogen pectic enzymes after its demethylesterification. The chain is Pectinesterase/pectinesterase inhibitor 3 from Arabidopsis thaliana (Mouse-ear cress).